We begin with the raw amino-acid sequence, 612 residues long: Isocitrate dehydrogenase kinase/phosphatase (612 aa).

ATP is bound by residues 327–333 (APGIKGL) and lysine 348. The active site involves aspartate 383. The segment at 593–612 (AGRASPEPDAPADARSVRVA) is disordered.

This sequence belongs to the AceK family.

It is found in the cytoplasm. The enzyme catalyses L-seryl-[isocitrate dehydrogenase] + ATP = O-phospho-L-seryl-[isocitrate dehydrogenase] + ADP + H(+). Functionally, bifunctional enzyme which can phosphorylate or dephosphorylate isocitrate dehydrogenase (IDH) on a specific serine residue. This is a regulatory mechanism which enables bacteria to bypass the Krebs cycle via the glyoxylate shunt in response to the source of carbon. When bacteria are grown on glucose, IDH is fully active and unphosphorylated, but when grown on acetate or ethanol, the activity of IDH declines drastically concomitant with its phosphorylation. This chain is Isocitrate dehydrogenase kinase/phosphatase, found in Paraburkholderia phytofirmans (strain DSM 17436 / LMG 22146 / PsJN) (Burkholderia phytofirmans).